Reading from the N-terminus, the 443-residue chain is MMIMTTRTFFSWFIVICAFWLTSFSSVPVHAQLKGTISTADFNPIPIAVTDFFSNDSIGLKIAAVVAADLERSGLFLPLDKASFLEKISNPNRQPHFPYWQEIKAQGLVIGQVIRENDGRLRVDFRLWDVFGQRQLKGRRFYTATERWRRVAHMIADEIYSEMTGESGYFDTRIVFIDETGPQNARIKRLAIMDQDGANLIYISDGSELVLTPRFSPKRQEITYMAYEHNQVPHVYLQQIEMGQRELIGTFNNMTIAPRFSSDGQKVIMSLLQNDGSANLYTMDLRTRMMTRLTTTSAIDTSASYSPDGTKIVFSSDRSGKPQIYTMNADGSNLQRISSNEGSYSTPIWSPRGDYIAFTKQLEGQFSIGVMHPDGQGERILTTGFHNEGPTWAPNGRVLMFFRKNPGMGPKIYTIDITGRNERQLPTPNDASDPAWSPLLNIQ.

An N-terminal signal peptide occupies residues 1–31 (MMIMTTRTFFSWFIVICAFWLTSFSSVPVHA). A disordered region spans residues 422–443 (ERQLPTPNDASDPAWSPLLNIQ).

The protein belongs to the TolB family. In terms of assembly, the Tol-Pal system is composed of five core proteins: the inner membrane proteins TolA, TolQ and TolR, the periplasmic protein TolB and the outer membrane protein Pal. They form a network linking the inner and outer membranes and the peptidoglycan layer.

It localises to the periplasm. Its function is as follows. Part of the Tol-Pal system, which plays a role in outer membrane invagination during cell division and is important for maintaining outer membrane integrity. This chain is Tol-Pal system protein TolB, found in Bartonella henselae (strain ATCC 49882 / DSM 28221 / CCUG 30454 / Houston 1) (Rochalimaea henselae).